A 410-amino-acid chain; its full sequence is LL-diaminopimelate aminotransferase (410 aa).

Substrate is bound by residues Y15 and G42. Pyridoxal 5'-phosphate is bound by residues Y72, 108–109 (AK), Y132, N188, Y219, and 247–249 (SFS). Substrate contacts are provided by K109, Y132, and N188. Residue K250 is modified to N6-(pyridoxal phosphate)lysine. Residues R258 and N293 each contribute to the pyridoxal 5'-phosphate site. Positions 293 and 389 each coordinate substrate.

It belongs to the class-I pyridoxal-phosphate-dependent aminotransferase family. LL-diaminopimelate aminotransferase subfamily. In terms of assembly, homodimer. It depends on pyridoxal 5'-phosphate as a cofactor.

It carries out the reaction (2S,6S)-2,6-diaminopimelate + 2-oxoglutarate = (S)-2,3,4,5-tetrahydrodipicolinate + L-glutamate + H2O + H(+). The protein operates within amino-acid biosynthesis; L-lysine biosynthesis via DAP pathway; LL-2,6-diaminopimelate from (S)-tetrahydrodipicolinate (aminotransferase route): step 1/1. Functionally, involved in the synthesis of meso-diaminopimelate (m-DAP or DL-DAP), required for both lysine and peptidoglycan biosynthesis. Catalyzes the direct conversion of tetrahydrodipicolinate to LL-diaminopimelate. This chain is LL-diaminopimelate aminotransferase, found in Bacteroides fragilis (strain YCH46).